Consider the following 287-residue polypeptide: Cell wall-binding protein YocH (287 aa).

The N-terminal stretch at 1 to 25 (MKKTIMSFVAVAALSTTAFGAHASA) is a signal peptide. LysM domains are found at residues 26–69 (KEIT…KLTI) and 78–121 (GQYT…TLSV). Residues 130–143 (TATENAQTNAPQAA) show a composition bias toward low complexity. Residues 130–193 (TATENAQTNA…SNTNNQEASK (64 aa)) form a disordered region. Over residues 165-181 (QETKAEAETSVNTEEKA) the composition is skewed to basic and acidic residues. Positions 182-193 (VQSNTNNQEASK) are enriched in polar residues.

It localises to the secreted. The protein localises to the cell wall. This Bacillus subtilis (strain 168) protein is Cell wall-binding protein YocH (yocH).